The chain runs to 334 residues: Phosphoribosylformylglycinamidine cyclo-ligase (334 aa).

It belongs to the AIR synthase family.

It is found in the cytoplasm. The catalysed reaction is 2-formamido-N(1)-(5-O-phospho-beta-D-ribosyl)acetamidine + ATP = 5-amino-1-(5-phospho-beta-D-ribosyl)imidazole + ADP + phosphate + H(+). The protein operates within purine metabolism; IMP biosynthesis via de novo pathway; 5-amino-1-(5-phospho-D-ribosyl)imidazole from N(2)-formyl-N(1)-(5-phospho-D-ribosyl)glycinamide: step 2/2. This is Phosphoribosylformylglycinamidine cyclo-ligase from Pyrococcus horikoshii (strain ATCC 700860 / DSM 12428 / JCM 9974 / NBRC 100139 / OT-3).